A 522-amino-acid polypeptide reads, in one-letter code: Proactivator polypeptide-like 1 (522 aa).

A signal peptide spans 1–17 (MLCALILWSGLLGAARA). Residues 18–59 (SPISVPRECAKGSEVWCQDLQAAAKCRAVRHCQSAVWNKPTV) constitute a propeptide that is removed on maturation. The Saposin A-type 1 domain occupies 19 to 59 (PISVPRECAKGSEVWCQDLQAAAKCRAVRHCQSAVWNKPTV). Saposin B-type domains are found at residues 60-144 (KSLP…EPLQ), 183-261 (EGAV…ERES), 291-371 (LGLT…GSKR), and 393-474 (QGSF…HGPK). Intrachain disulfides connect Cys64-Cys140, Cys67-Cys134, and Cys95-Cys107. A propeptide spanning residues 146 to 183 (HLAETTSERPLTQEDANEVMAPFLSNGALSFHPSQMPE) is cleaved from the precursor. Disulfide bonds link Cys187–Cys257, Cys190–Cys251, and Cys216–Cys227. Asn204 is a glycosylation site (N-linked (GlcNAc...) asparagine). The propeptide occupies 261-290 (SAHWLTRVAAVDGVPSLEMEMPRTNELQMQ). Disulfide bonds link Cys295-Cys367, Cys298-Cys361, and Cys326-Cys337. Asn312 carries an N-linked (GlcNAc...) (high mannose) asparagine glycan. Residues 371–392 (RRARSISRAVATTPSLPVDEEN) constitute a propeptide that is removed on maturation. 3 disulfides stabilise this stretch: Cys397–Cys470, Cys400–Cys464, and Cys428–Cys439. The propeptide occupies 475–522 (TPLLGTDQCVMGPSFWCKSPEAAEMCNALEHCQRLVWKKPVSKINEQP). A Saposin A-type 2 domain is found at 476–516 (PLLGTDQCVMGPSFWCKSPEAAEMCNALEHCQRLVWKKPVS).

The protein resides in the secreted. Its function is as follows. May activate the lysosomal degradation of sphingolipids. The protein is Proactivator polypeptide-like 1 (Psapl1) of Mus musculus (Mouse).